The sequence spans 554 residues: 2-succinyl-5-enolpyruvyl-6-hydroxy-3-cyclohexene-1-carboxylate synthase (554 aa).

The protein belongs to the TPP enzyme family. MenD subfamily. Homodimer. Mg(2+) serves as cofactor. Mn(2+) is required as a cofactor. Requires thiamine diphosphate as cofactor.

It carries out the reaction isochorismate + 2-oxoglutarate + H(+) = 5-enolpyruvoyl-6-hydroxy-2-succinyl-cyclohex-3-ene-1-carboxylate + CO2. The protein operates within quinol/quinone metabolism; 1,4-dihydroxy-2-naphthoate biosynthesis; 1,4-dihydroxy-2-naphthoate from chorismate: step 2/7. It functions in the pathway quinol/quinone metabolism; menaquinone biosynthesis. Functionally, catalyzes the thiamine diphosphate-dependent decarboxylation of 2-oxoglutarate and the subsequent addition of the resulting succinic semialdehyde-thiamine pyrophosphate anion to isochorismate to yield 2-succinyl-5-enolpyruvyl-6-hydroxy-3-cyclohexene-1-carboxylate (SEPHCHC). The protein is 2-succinyl-5-enolpyruvyl-6-hydroxy-3-cyclohexene-1-carboxylate synthase of Mycobacterium tuberculosis (strain ATCC 25177 / H37Ra).